A 159-amino-acid chain; its full sequence is 2-C-methyl-D-erythritol 2,4-cyclodiphosphate synthase (159 aa).

Residues D8 and H10 each coordinate a divalent metal cation. Residues 8–10 (DVH) and 34–35 (HS) contribute to the 4-CDP-2-C-methyl-D-erythritol 2-phosphate site. H42 provides a ligand contact to a divalent metal cation. Residues 56-58 (DIG), 61-65 (FPDTD), 132-135 (TTTE), F139, and R142 contribute to the 4-CDP-2-C-methyl-D-erythritol 2-phosphate site.

Belongs to the IspF family. In terms of assembly, homotrimer. A divalent metal cation is required as a cofactor.

It carries out the reaction 4-CDP-2-C-methyl-D-erythritol 2-phosphate = 2-C-methyl-D-erythritol 2,4-cyclic diphosphate + CMP. It participates in isoprenoid biosynthesis; isopentenyl diphosphate biosynthesis via DXP pathway; isopentenyl diphosphate from 1-deoxy-D-xylulose 5-phosphate: step 4/6. Functionally, involved in the biosynthesis of isopentenyl diphosphate (IPP) and dimethylallyl diphosphate (DMAPP), two major building blocks of isoprenoid compounds. Catalyzes the conversion of 4-diphosphocytidyl-2-C-methyl-D-erythritol 2-phosphate (CDP-ME2P) to 2-C-methyl-D-erythritol 2,4-cyclodiphosphate (ME-CPP) with a corresponding release of cytidine 5-monophosphate (CMP). The polypeptide is 2-C-methyl-D-erythritol 2,4-cyclodiphosphate synthase (Finegoldia magna (strain ATCC 29328 / DSM 20472 / WAL 2508) (Peptostreptococcus magnus)).